Here is a 110-residue protein sequence, read N- to C-terminus: Large ribosomal subunit protein uL22 (110 aa).

The protein belongs to the universal ribosomal protein uL22 family. As to quaternary structure, part of the 50S ribosomal subunit.

In terms of biological role, this protein binds specifically to 23S rRNA; its binding is stimulated by other ribosomal proteins, e.g. L4, L17, and L20. It is important during the early stages of 50S assembly. It makes multiple contacts with different domains of the 23S rRNA in the assembled 50S subunit and ribosome. The globular domain of the protein is located near the polypeptide exit tunnel on the outside of the subunit, while an extended beta-hairpin is found that lines the wall of the exit tunnel in the center of the 70S ribosome. This is Large ribosomal subunit protein uL22 from Mannheimia succiniciproducens (strain KCTC 0769BP / MBEL55E).